The following is a 770-amino-acid chain: Amyloid-beta precursor protein (770 aa).

Residues 1–17 (MLPGLALLLLAAWTARA) form the signal peptide. The Extracellular portion of the chain corresponds to 18–701 (LEVPTDGNAG…AEDVGSNKGA (684 aa)). The tract at residues 28–123 (LLAEPQIAMF…PYRCLVGEFV (96 aa)) is GFLD subdomain. An E1 domain is found at 28–189 (LLAEPQIAMF…RGVEFVCCPL (162 aa)). 6 disulfide bridges follow: Cys38-Cys62, Cys73-Cys117, Cys98-Cys105, Cys133-Cys187, Cys144-Cys174, and Cys158-Cys186. Residue 96–110 (NWCKRGRKQCKTHPH) participates in heparin binding. Residues 131 to 189 (DKCKFLHQERMDVCETHLHWHTVAKETCSEKSTNLHDYGMLLPCGIDKFRGVEFVCCPL) form a cuBD subdomain region. Cu(2+) is bound by residues His147, His151, and Tyr168. The zinc-binding stretch occupies residues 181-188 (GVEFVCCP). Residues Glu183, Cys186, and Cys187 each coordinate Zn(2+). Over residues 194 to 207 (DNVDSADAEEDDSD) the composition is skewed to acidic residues. The segment at 194 to 284 (DNVDSADAEE…TTTTTTESVE (91 aa)) is disordered. At Ser198 the chain carries Phosphoserine; by CK2. Residue Ser206 is modified to Phosphoserine; by CK1. A sulfotyrosine mark is found at Tyr217 and Tyr262. A compositionally biased stretch (acidic residues) spans 228-264 (VAEEEEVAEVEEEEADDDEDDEDGDEVEEEAEEPYEE). Positions 268-281 (RTTSIATTTTTTTE) are enriched in low complexity. 3 disulfide bridges follow: Cys291/Cys341, Cys300/Cys324, and Cys316/Cys337. The BPTI/Kunitz inhibitor domain maps to 291 to 341 (CSEQAETGPCRAMISRWYFDVTEGKCAPFFYGGCGGNRNNFDTEEYCMAVC). Tyr336 carries the sulfotyrosine modification. The OX-2 signature appears at 344-365 (VMSQSLLKTTQEPLARDPVKLP). Residues 374 to 565 (AVDKYLETPG…EEIQDEVDEL (192 aa)) enclose the E2 domain. The interval 391–423 (FQKAKERLEAKHRERMSQVMREWEEAERQAKNL) is heparin-binding. Ser441 is modified (phosphoserine). The heparin-binding stretch occupies residues 491 to 522 (FNMLKKYVRAEQKDRQHTLKHFEHVRMVDPKK). Residue Tyr497 is modified to Phosphotyrosine. The interval 523–540 (AAQIRSQVMTHLRVIYER) is collagen-binding. N-linked (GlcNAc...) asparagine glycans are attached at residues Asn542 and Asn571. Cu(2+) contacts are provided by His677, Tyr681, His684, and His685. 4 residues coordinate Zn(2+): His677, Tyr681, His684, and His685. The segment at 695–722 (VGSNKGAIIGLMVGGVVIATVIVITLVM) is interaction with PSEN1. Residues 702 to 722 (IIGLMVGGVVIATVIVITLVM) traverse the membrane as a helical segment. The Cytoplasmic portion of the chain corresponds to 723–770 (LKKKQYTSIHHGVVEVDAAVTPEERHLSKMQQNGYENPTYKFFEQMQN). Residues 724–734 (KKKQYTSIHHG) carry the Basolateral sorting signal motif. Thr729 carries the post-translational modification Phosphothreonine. A Phosphoserine; by APP-kinase I modification is found at Ser730. The interval 732–751 (HHGVVEVDAAVTPEERHLSK) is interaction with G(o)-alpha. Thr743 is modified (phosphothreonine; by CDK5 and MAPK10). The required for the interaction with KIF5B and for anterograde transport in axons stretch occupies residues 756–770 (GYENPTYKFFEQMQN). Position 757 is a phosphotyrosine; by ABL1 (Tyr757). The YENPXY motif; contains endocytosis signal motif lies at 757–762 (YENPTY). A Glycyl lysine isopeptide (Lys-Gly) (interchain with G-Cter in ubiquitin) cross-link involves residue Lys763.

Belongs to the APP family. Binds, via its C-terminus, to the PID domain of several cytoplasmic proteins, including APBB family members, the APBA family, MAPK8IP1, SHC1 and NUMB and DAB1. Binding to DAB1 inhibits its serine phosphorylation. Interacts (via NPXY motif) with DAB2 (via PID domain); the interaction is impaired by tyrosine phosphorylation of the NPXY motif. Also interacts with GPCR-like protein BPP, APPBP1, IB1, KNS2 (via its TPR domains), APPBP2 (via BaSS) and DDB1. In vitro, it binds MAPT via the MT-binding domains. Associates with microtubules in the presence of ATP and in a kinesin-dependent manner. Interacts, through a C-terminal domain, with GNAO1. Amyloid-beta protein 42 binds CHRNA7 in hippocampal neurons. Amyloid-beta associates with HADH2. Interacts with CPEB1, ANKS1B and AGER. Interacts with ITM2B. Interacts with ITM2C. Interacts with IDE. Can form homodimers; dimerization is enhanced in the presence of Cu(2+) ions. Can form homodimers; this is promoted by heparin binding. Amyloid-beta protein 40 interacts with S100A9. CTF-alpha product of APP interacts with GSAP. Interacts with SORL1 (via N-terminal ectodomain); this interaction retains APP in the trans-Golgi network and reduces processing into soluble APP-alpha and amyloid-beta peptides. The C99 fragment also interacts with SORL1. Interacts with PLD3. Interacts with VDAC1. Interacts with NSG1; could regulate APP processing. Amyloid-beta protein 42 interacts with FPR2. Interacts (via transmembrane region) with PSEN1; the interaction is direct. Interacts with LRRK2. Interacts (via cytoplasmic domain) with KIF5B. Interacts (via C-terminus) with APBB2/FE65L1 (via C-terminus). Interacts (via intracellular domain) with APBB3. Post-translationally, proteolytically processed under normal cellular conditions. Cleavage either by alpha-secretase, beta-secretase or theta-secretase leads to generation and extracellular release of soluble APP peptides, S-APP-alpha and S-APP-beta, and the retention of corresponding membrane-anchored C-terminal fragments, C80, C83 and C99. Subsequent processing of C80 and C83 by gamma-secretase yields P3 peptides. This is the major secretory pathway and is non-amyloidogenic. Alternatively, presenilin/nicastrin-mediated gamma-secretase processing of C99 releases the amyloid-beta proteins, amyloid-beta protein 40 and amyloid-beta protein 42, major components of amyloid plaques, and the cytotoxic C-terminal fragments, gamma-CTF(50), gamma-CTF(57) and gamma-CTF(59). PSEN1 cleavage is more efficient with C83 than with C99 as substrate (in vitro). Amyloid-beta protein 40 and Amyloid-beta protein 42 are cleaved by ACE. Many other minor amyloid-beta peptides, amyloid-beta 1-X peptides, are found in cerebral spinal fluid (CSF) including the amyloid-beta X-15 peptides, produced from the cleavage by alpha-secretase. In terms of processing, proteolytically cleaved by caspases during neuronal apoptosis. Cleavage at Asp-739 by either caspase-3, -8 or -9 results in the production of the neurotoxic C31 peptide and the increased production of amyloid-beta peptides. N- and O-glycosylated. Post-translationally, phosphorylation in the C-terminal on tyrosine, threonine and serine residues is neuron-specific. Phosphorylation can affect APP processing, neuronal differentiation and interaction with other proteins. Phosphorylated on Thr-743 in neuronal cells by Cdc5 kinase and Mapk10, in dividing cells by Cdc2 kinase in a cell-cycle dependent manner with maximal levels at the G2/M phase and, in vitro, by GSK-3-beta. The Thr-743 phosphorylated form causes a conformational change which reduces binding of Fe65 family members. In dopaminergic (DA) neurons, phosphorylation on Thr-743 by LRKK2 promotes the production and the nuclear translocation of the APP intracellular domain (AICD) which induces DA neuron apoptosis. Phosphorylation on Tyr-757 is required for SHC binding. Phosphorylated in the extracellular domain by casein kinases on both soluble and membrane-bound APP. This phosphorylation is inhibited by heparin. In terms of processing, trophic-factor deprivation triggers the cleavage of surface APP by beta-secretase to release sAPP-beta which is further cleaved to release an N-terminal fragment of APP (N-APP). Amyloid-beta peptides are degraded by IDE. Post-translationally, sulfated on tyrosine residues.

It localises to the cell membrane. It is found in the membrane. The protein resides in the perikaryon. Its subcellular location is the cell projection. The protein localises to the growth cone. It localises to the clathrin-coated pit. It is found in the early endosome. The protein resides in the cytoplasmic vesicle. Its subcellular location is the endoplasmic reticulum. The protein localises to the golgi apparatus. It localises to the secreted. It is found in the cell surface. The protein resides in the nucleus. Its subcellular location is the cytoplasm. In terms of biological role, functions as a cell surface receptor and performs physiological functions on the surface of neurons relevant to neurite growth, neuronal adhesion and axonogenesis. Interaction between APP molecules on neighboring cells promotes synaptogenesis. Involved in cell mobility and transcription regulation through protein-protein interactions. Can promote transcription activation through binding to APBB1-KAT5 and inhibit Notch signaling through interaction with Numb. Couples to apoptosis-inducing pathways such as those mediated by G(o) and JIP. Inhibits G(o)-alpha ATPase activity. Acts as a kinesin I membrane receptor, mediating the axonal transport of beta-secretase and presenilin 1. By acting as a kinesin I membrane receptor, plays a role in axonal anterograde transport of cargo towards synapses in axons. May be involved in copper homeostasis/oxidative stress through copper ion reduction. In vitro, copper-metallated APP induces neuronal death directly or is potentiated through Cu(2+)-mediated low-density lipoprotein oxidation. Can regulate neurite outgrowth through binding to components of the extracellular matrix such as heparin and collagen I and IV. Induces a AGER-dependent pathway that involves activation of p38 MAPK, resulting in internalization of amyloid-beta peptide and mitochondrial dysfunction in cultured cortical neurons. Provides Cu(2+) ions for GPC1 which are required for release of nitric oxide (NO) and subsequent degradation of the heparan sulfate chains on GPC1. Functionally, amyloid-beta peptides are lipophilic metal chelators with metal-reducing activity. Binds transient metals such as copper, zinc and iron. The gamma-CTF peptides as well as the caspase-cleaved peptides, including C31, are potent enhancers of neuronal apoptosis. The protein is Amyloid-beta precursor protein of Pan troglodytes (Chimpanzee).